The primary structure comprises 591 residues: Acetyltransferase spyB (591 aa).

N-linked (GlcNAc...) asparagine glycosylation is present at Asn-114. Transmembrane regions (helical) follow at residues 123-143 (GTIIWTLKYVPLAASRCLIFL), 168-188 (TLLYALPFLLAQNLVPAILIL), 199-219 (LWIFWSVFVFYQWLQIPISHG), 228-248 (VGVQLFIVILQGFNLVLINPL), 309-329 (SAFLVRQAAIVAWLYLYLNCA), 383-403 (ASILSVGVGLDAPEDWPPLFG), 453-473 (IFFVFLVSGVMHVMSDLLMGI), 481-501 (ILFFCSMAVGVMIEDAVQAAW), and 529-549 (LVGFIWVCVWLSLTTPAWLCP).

Belongs to the wax synthase family.

Its subcellular location is the membrane. The enzyme catalyses sartorypyrone F + acetyl-CoA = sartorypyrone G + CoA. It catalyses the reaction sartorypyrone D + acetyl-CoA = sartorypyrone A + CoA. Its pathway is secondary metabolite biosynthesis; terpenoid biosynthesis. Functionally, acetyltransferase; part of the gene cluster that mediates the biosynthesis of meroterpenoids called sartorypyrones. SpyB catalyzes the last step of the pathway and is responsible for the acetylation of sartorypyrones D and F to produce sartorypyrones A and G, respectively. The biosynthesis of sartorypyrones begins with the production of triacetic acid lactone (TAL) by the NR-PKS spyA using one molecule of acetyl-CoA and two molecules of malonyl-CoA. The prenyltransferase spyF then conjugates geranylgeranyl pyrophosphate (GGPP) to TAL to form geranylgeranyl-triacetate lactone, for which the pathway-specific geranylgeranyl pyrophosphate synthase (GGPS) spyE is required to provide GGPP. Subsequently, geranylgeranyl-triacetate lactone is epoxidized at the terminal olein by the FAD-dependent monooxygenase spyC, followed by cyclization of the terpenoid component catalyzed by the terpene cyclase spyD to produce both the bicyclic sartorypyrone F and the monocyclic sartorypyrone D. Finally, the last step of the biosynthesis involves the acetylation of the meroterpenoids sartorypyrones D and F by the acetyltransferase SpyB to produce sartorypyrones A and G, respectively. This Aspergillus fumigatus (strain ATCC MYA-4609 / CBS 101355 / FGSC A1100 / Af293) (Neosartorya fumigata) protein is Acetyltransferase spyB.